Consider the following 196-residue polypeptide: Heat shock protein beta-8 (196 aa).

Positions 1 to 28 (MADGQLPFPCSYPSRLRRDPFRDSPLSS) are disordered. S24 and S57 each carry phosphoserine. Residue T63 is modified to Phosphothreonine. Asymmetric dimethylarginine is present on residues R71 and R78. A sHSP domain is found at 74-185 (TATARFGVPA…PFGESSFNNE (112 aa)). Residues 176-196 (PFGESSFNNELPQDNQEVTCS) are disordered. Over residues 178–196 (GESSFNNELPQDNQEVTCS) the composition is skewed to polar residues.

The protein belongs to the small heat shock protein (HSP20) family. In terms of assembly, monomer. Forms a ternary complex with BAG3 and HSPA1A. Component of the chaperone-assisted selective autophagy (CASA) complex consisting of BAG3, HSPA8/HSC70, HSPB8 and STUB1/CHIP. Interacts with HSPB1. Interacts with DNAJB6. Interacts with BAG3. Phosphorylated.

Its subcellular location is the cytoplasm. It localises to the nucleus. Involved in the chaperone-assisted selective autophagy (CASA), a crucial process for protein quality control, particularly in mechanical strained cells and tissues such as muscle. Displays temperature-dependent chaperone activity. This is Heat shock protein beta-8 (Hspb8) from Rattus norvegicus (Rat).